Consider the following 432-residue polypeptide: UDP-N-acetylmuramate--L-alanine ligase (432 aa).

Residue 108 to 114 coordinates ATP; sequence GAHGKTS.

The protein belongs to the MurCDEF family.

The protein resides in the cytoplasm. It carries out the reaction UDP-N-acetyl-alpha-D-muramate + L-alanine + ATP = UDP-N-acetyl-alpha-D-muramoyl-L-alanine + ADP + phosphate + H(+). It functions in the pathway cell wall biogenesis; peptidoglycan biosynthesis. Cell wall formation. The protein is UDP-N-acetylmuramate--L-alanine ligase of Bacillus licheniformis (strain ATCC 14580 / DSM 13 / JCM 2505 / CCUG 7422 / NBRC 12200 / NCIMB 9375 / NCTC 10341 / NRRL NRS-1264 / Gibson 46).